A 69-amino-acid polypeptide reads, in one-letter code: UPF0291 protein CD630_10710 (69 aa).

This sequence belongs to the UPF0291 family.

It localises to the cytoplasm. This Clostridioides difficile (strain 630) (Peptoclostridium difficile) protein is UPF0291 protein CD630_10710.